The sequence spans 143 residues: Nucleoside diphosphate kinase (143 aa).

Positions 11, 59, 87, 93, 104, and 114 each coordinate ATP. The active-site Pros-phosphohistidine intermediate is His-117.

It belongs to the NDK family. In terms of assembly, homotetramer. Requires Mg(2+) as cofactor.

The protein localises to the cytoplasm. It carries out the reaction a 2'-deoxyribonucleoside 5'-diphosphate + ATP = a 2'-deoxyribonucleoside 5'-triphosphate + ADP. The enzyme catalyses a ribonucleoside 5'-diphosphate + ATP = a ribonucleoside 5'-triphosphate + ADP. Functionally, major role in the synthesis of nucleoside triphosphates other than ATP. The ATP gamma phosphate is transferred to the NDP beta phosphate via a ping-pong mechanism, using a phosphorylated active-site intermediate. This chain is Nucleoside diphosphate kinase, found in Citrobacter koseri (strain ATCC BAA-895 / CDC 4225-83 / SGSC4696).